A 448-amino-acid polypeptide reads, in one-letter code: GTPase Der (448 aa).

2 EngA-type G domains span residues Pro3–Glu167 and Thr182–Thr355. Residues Gly9–Ser16, Asp56–Phe60, Asn119–Glu122, Gly188–Ser195, Asp235–Leu239, and Asn300–Asp303 each bind GTP. Positions Arg356–His440 constitute a KH-like domain.

This sequence belongs to the TRAFAC class TrmE-Era-EngA-EngB-Septin-like GTPase superfamily. EngA (Der) GTPase family. As to quaternary structure, associates with the 50S ribosomal subunit.

Functionally, GTPase that plays an essential role in the late steps of ribosome biogenesis. This chain is GTPase Der, found in Leptothrix cholodnii (strain ATCC 51168 / LMG 8142 / SP-6) (Leptothrix discophora (strain SP-6)).